The following is a 1072-amino-acid chain: DNA-directed RNA polymerase subunit beta (1072 aa).

Belongs to the RNA polymerase beta chain family. As to quaternary structure, in plastids the minimal PEP RNA polymerase catalytic core is composed of four subunits: alpha, beta, beta', and beta''. When a (nuclear-encoded) sigma factor is associated with the core the holoenzyme is formed, which can initiate transcription.

Its subcellular location is the plastid. The protein localises to the chloroplast. The enzyme catalyses RNA(n) + a ribonucleoside 5'-triphosphate = RNA(n+1) + diphosphate. In terms of biological role, DNA-dependent RNA polymerase catalyzes the transcription of DNA into RNA using the four ribonucleoside triphosphates as substrates. This chain is DNA-directed RNA polymerase subunit beta, found in Nasturtium officinale (Watercress).